A 101-amino-acid chain; its full sequence is YcgL domain-containing protein ABBFA_001807 (101 aa).

One can recognise a YcgL domain in the interval 1–92 (MHCDIYRSSK…PPEGLINPNA (92 aa)).

This is YcgL domain-containing protein ABBFA_001807 from Acinetobacter baumannii (strain AB307-0294).